Consider the following 113-residue polypeptide: Flagellar hook-basal body complex protein FliE (113 aa).

Belongs to the FliE family.

The protein localises to the bacterial flagellum basal body. The polypeptide is Flagellar hook-basal body complex protein FliE (Burkholderia mallei (strain NCTC 10247)).